We begin with the raw amino-acid sequence, 154 residues long: Pro-corazonin (154 aa).

The signal sequence occupies residues 1-19 (MLRLLLLPLFLFTLSMCMG). Pyrrolidone carboxylic acid is present on Gln-20. Asn-30 carries the post-translational modification Asparagine amide. The propeptide occupies 70-154 (LERCLSQLQR…SAEPNVFGKH (85 aa)).

It belongs to the corazonin family. In terms of tissue distribution, expression is restricted to 24 neurons in the larval CNS (8 in the brain and 16 in the ventral nerve cord) and 12-16 neurons in the pars lateralis of the adult brain.

The protein resides in the secreted. Cardioactive peptide. Corazonin is probably involved in the physiological regulation of the heart beat. Clock (Clk) and cycle (cyc) proteins negatively regulate Crz transcription in a cell-specific manner. The sequence is that of Pro-corazonin (Crz) from Drosophila erecta (Fruit fly).